A 372-amino-acid chain; its full sequence is 4-hydroxy-3-methylbut-2-en-1-yl diphosphate synthase (flavodoxin) (372 aa).

[4Fe-4S] cluster-binding residues include C270, C273, C305, and E312.

The protein belongs to the IspG family. [4Fe-4S] cluster is required as a cofactor.

It catalyses the reaction (2E)-4-hydroxy-3-methylbut-2-enyl diphosphate + oxidized [flavodoxin] + H2O + 2 H(+) = 2-C-methyl-D-erythritol 2,4-cyclic diphosphate + reduced [flavodoxin]. The protein operates within isoprenoid biosynthesis; isopentenyl diphosphate biosynthesis via DXP pathway; isopentenyl diphosphate from 1-deoxy-D-xylulose 5-phosphate: step 5/6. Functionally, converts 2C-methyl-D-erythritol 2,4-cyclodiphosphate (ME-2,4cPP) into 1-hydroxy-2-methyl-2-(E)-butenyl 4-diphosphate. The polypeptide is 4-hydroxy-3-methylbut-2-en-1-yl diphosphate synthase (flavodoxin) (Aliivibrio salmonicida (strain LFI1238) (Vibrio salmonicida (strain LFI1238))).